The following is a 431-amino-acid chain: NADH-quinone oxidoreductase chain 1 (431 aa).

Glycine 54–glycine 63 serves as a coordination point for NAD(+). Glycine 167–serine 214 provides a ligand contact to FMN. Residues cysteine 346, cysteine 349, cysteine 352, and cysteine 392 each contribute to the [4Fe-4S] cluster site.

It belongs to the complex I 51 kDa subunit family. In terms of assembly, NDH-1 is composed of at least 14 different subunits, Nqo1 to Nqo14. The complex has a L-shaped structure, with the hydrophobic arm (subunits Nqo7, Nqo8, Nqo10 to Nqo14) embedded in the inner membrane and the hydrophilic peripheral arm (subunits Nqo1 to Nqo6, Nqo9) protruding into the bacterial cytoplasm. The hydrophilic domain contains all the redox centers. FMN serves as cofactor. It depends on [4Fe-4S] cluster as a cofactor.

It is found in the cell inner membrane. It carries out the reaction a quinone + NADH + 5 H(+)(in) = a quinol + NAD(+) + 4 H(+)(out). Its function is as follows. NDH-1 shuttles electrons from NADH, via FMN and iron-sulfur (Fe-S) centers, to quinones in the respiratory chain. The immediate electron acceptor for the enzyme in this species is believed to be ubiquinone. Couples the redox reaction to proton translocation (for every two electrons transferred, four hydrogen ions are translocated across the cytoplasmic membrane), and thus conserves the redox energy in a proton gradient. The chain is NADH-quinone oxidoreductase chain 1 (nqo1) from Paracoccus denitrificans.